We begin with the raw amino-acid sequence, 85 residues long: Small ribosomal subunit protein bS16c (85 aa).

Belongs to the bacterial ribosomal protein bS16 family.

It is found in the plastid. Its subcellular location is the chloroplast. This Agrostis stolonifera (Creeping bentgrass) protein is Small ribosomal subunit protein bS16c.